A 69-amino-acid chain; its full sequence is DNA-directed RNA polymerase subunit epsilon (69 aa).

It belongs to the RNA polymerase subunit epsilon family. As to quaternary structure, monomer. RNAP is composed of a core of 2 alpha, a beta and a beta' subunit. The core is associated with a delta subunit, and at least one of epsilon or omega. When a sigma factor is associated with the core the holoenzyme is formed, which can initiate transcription.

It localises to the cytoplasm. It is found in the nucleoid. It catalyses the reaction RNA(n) + a ribonucleoside 5'-triphosphate = RNA(n+1) + diphosphate. Functionally, a non-essential component of RNA polymerase (RNAP). Has a similar structure to bacteriophage T7 protein Gp2 (AC P03704), which is known to bind to RNAP in the DNA binding-cleft. Unlike Gp2 however, this protein does not inhibit transcription initiation. In vitro reconstitution experiments show this subunit is dispensible. This is DNA-directed RNA polymerase subunit epsilon from Bacillus subtilis (strain 168).